The following is a 560-amino-acid chain: Dihydroxy-acid dehydratase (560 aa).

The disordered stretch occupies residues Met1–Pro20. A [2Fe-2S] cluster-binding site is contributed by Cys52. Position 84 (Asp84) interacts with Mg(2+). Cys125 contacts [2Fe-2S] cluster. 2 residues coordinate Mg(2+): Asp126 and Lys127. An N6-carboxylysine modification is found at Lys127. Position 197 (Cys197) interacts with [2Fe-2S] cluster. Glu448 serves as a coordination point for Mg(2+). Ser474 functions as the Proton acceptor in the catalytic mechanism.

Belongs to the IlvD/Edd family. In terms of assembly, homodimer. [2Fe-2S] cluster serves as cofactor. Mg(2+) is required as a cofactor.

It catalyses the reaction (2R)-2,3-dihydroxy-3-methylbutanoate = 3-methyl-2-oxobutanoate + H2O. It carries out the reaction (2R,3R)-2,3-dihydroxy-3-methylpentanoate = (S)-3-methyl-2-oxopentanoate + H2O. It functions in the pathway amino-acid biosynthesis; L-isoleucine biosynthesis; L-isoleucine from 2-oxobutanoate: step 3/4. The protein operates within amino-acid biosynthesis; L-valine biosynthesis; L-valine from pyruvate: step 3/4. Its function is as follows. Functions in the biosynthesis of branched-chain amino acids. Catalyzes the dehydration of (2R,3R)-2,3-dihydroxy-3-methylpentanoate (2,3-dihydroxy-3-methylvalerate) into 2-oxo-3-methylpentanoate (2-oxo-3-methylvalerate) and of (2R)-2,3-dihydroxy-3-methylbutanoate (2,3-dihydroxyisovalerate) into 2-oxo-3-methylbutanoate (2-oxoisovalerate), the penultimate precursor to L-isoleucine and L-valine, respectively. In Leptospira interrogans serogroup Icterohaemorrhagiae serovar Lai (strain 56601), this protein is Dihydroxy-acid dehydratase.